A 275-amino-acid polypeptide reads, in one-letter code: Adenosylcobinamide-GDP ribazoletransferase (275 aa).

Helical transmembrane passes span 52-72 (VVGVVFGVLTAVLLGLLGVLG), 73-93 (VTPLLTAVLVVIMWELLNRMM), 126-146 (MGFSAVLFSLLVQVTAVAALV), 181-201 (FGAMVVGTVRLWWVAAWLVAL), 208-228 (VAVWAAGPAVVWIVPAAGIIA), and 251-271 (IGAGIHLSAAVVAVFCAVAVA).

Belongs to the CobS family. Mg(2+) is required as a cofactor.

It localises to the cell membrane. The catalysed reaction is alpha-ribazole + adenosylcob(III)inamide-GDP = adenosylcob(III)alamin + GMP + H(+). The enzyme catalyses alpha-ribazole 5'-phosphate + adenosylcob(III)inamide-GDP = adenosylcob(III)alamin 5'-phosphate + GMP + H(+). Its pathway is cofactor biosynthesis; adenosylcobalamin biosynthesis; adenosylcobalamin from cob(II)yrinate a,c-diamide: step 7/7. Its function is as follows. Joins adenosylcobinamide-GDP and alpha-ribazole to generate adenosylcobalamin (Ado-cobalamin). Also synthesizes adenosylcobalamin 5'-phosphate from adenosylcobinamide-GDP and alpha-ribazole 5'-phosphate. In Corynebacterium efficiens (strain DSM 44549 / YS-314 / AJ 12310 / JCM 11189 / NBRC 100395), this protein is Adenosylcobinamide-GDP ribazoletransferase.